The chain runs to 304 residues: Putative S-adenosyl-L-methionine-dependent methyltransferase Mjls_1071 (304 aa).

S-adenosyl-L-methionine-binding positions include Asp130 and 159–160; that span reads DL.

This sequence belongs to the UPF0677 family.

In terms of biological role, exhibits S-adenosyl-L-methionine-dependent methyltransferase activity. The polypeptide is Putative S-adenosyl-L-methionine-dependent methyltransferase Mjls_1071 (Mycobacterium sp. (strain JLS)).